The sequence spans 221 residues: Ribosomal RNA small subunit methyltransferase G (221 aa).

S-adenosyl-L-methionine is bound by residues Gly85, Phe90, 136 to 137 (AE), and Arg149.

This sequence belongs to the methyltransferase superfamily. RNA methyltransferase RsmG family.

The protein localises to the cytoplasm. Its function is as follows. Specifically methylates the N7 position of a guanine in 16S rRNA. In Porphyromonas gingivalis (strain ATCC BAA-308 / W83), this protein is Ribosomal RNA small subunit methyltransferase G.